The sequence spans 1594 residues: Protein SHORTAGE IN CHIASMATA 1 (1594 aa).

Disordered regions lie at residues 1148 to 1180 (DSRSVMTDSSSSVSSGPDSDTHHVSVHSGSKKK), 1239 to 1283 (APFK…QPDF), 1396 to 1426 (AADIDSSSERYATEKDSKYDNNTSLRGYADN), 1491 to 1523 (RSRARKQQQSLPSYASPPSLETPGNIKKANTKR), and 1536 to 1594 (GGNK…LVWK). The span at 1151 to 1165 (SVMTDSSSSVSSGPD) shows a compositional bias: low complexity. Composition is skewed to basic and acidic residues over residues 1254–1265 (PSKDPERFDKKS) and 1402–1414 (SSERYATEKDSKY). The span at 1577-1594 (QSLSYTANGTGQTKLVWK) shows a compositional bias: polar residues.

This sequence belongs to the XPF family. As to quaternary structure, interacts with PTD. Highest levels in young buds, where male meiosis occurs. Also present at low levels in plantlets, leaves, flowers, and roots.

Its subcellular location is the nucleus. Essential for the formation of class I meiotic crossovers. The sequence is that of Protein SHORTAGE IN CHIASMATA 1 from Arabidopsis thaliana (Mouse-ear cress).